The sequence spans 278 residues: Tetraspanin-13 (278 aa).

Topologically, residues 1–25 are cytoplasmic; sequence MARDKEDQNNENPSIVQNMSFPFNT. Residues 26–46 traverse the membrane as a helical segment; it reads IFLISSAIFLVTAAFWFVAVM. The Extracellular segment spans residues 47–62; sequence TLHYRTDECNRFVTTP. The helical transmembrane segment at 63–83 threads the bilayer; sequence GIFISFSLLAMSLTGFYAAYF. The Cytoplasmic portion of the chain corresponds to 84-92; it reads KSDCLFRIH. A helical transmembrane segment spans residues 93-113; that stretch reads FFIFFLWMFVVVSKAIFVIFL. The Extracellular portion of the chain corresponds to 114 to 249; the sequence is HKETNPRLFP…DVHNTSFSIT (136 aa). Asparagine 202, asparagine 220, and asparagine 243 each carry an N-linked (GlcNAc...) asparagine glycan. The chain crosses the membrane as a helical span at residues 250–270; sequence VNIIHIIFSLCIGMTGWFAWL. Over 271–278 the chain is Cytoplasmic; that stretch reads RILRESQK.

The protein belongs to the tetraspanin (TM4SF) family.

Its subcellular location is the membrane. May be involved in the regulation of cell differentiation. This is Tetraspanin-13 (TET13) from Arabidopsis thaliana (Mouse-ear cress).